The primary structure comprises 233 residues: Orotidine 5'-phosphate decarboxylase (233 aa).

Substrate contacts are provided by residues Asp13, Lys35, 62–71 (DLKFHDIPNT), Thr122, Arg182, Gln191, Gly211, and Arg212. Lys64 serves as the catalytic Proton donor.

Belongs to the OMP decarboxylase family. Type 1 subfamily. In terms of assembly, homodimer.

The catalysed reaction is orotidine 5'-phosphate + H(+) = UMP + CO2. Its pathway is pyrimidine metabolism; UMP biosynthesis via de novo pathway; UMP from orotate: step 2/2. Catalyzes the decarboxylation of orotidine 5'-monophosphate (OMP) to uridine 5'-monophosphate (UMP). The sequence is that of Orotidine 5'-phosphate decarboxylase from Pseudomonas putida (strain ATCC 47054 / DSM 6125 / CFBP 8728 / NCIMB 11950 / KT2440).